The sequence spans 64 residues: DNA-binding protein 7a (64 aa).

N6-methyllysine; partial is present on residues K5 and K7.

It belongs to the 7 kDa DNA-binding/endoribonuclease P2 family. In terms of assembly, homodimer. In terms of processing, lys-5 and Lys-7 were found to be 60% monomethylated. ADP-ribosylated by endogenous proteins in vitro.

Its function is as follows. Can constrain negative DNA supercoils. May be involved in maintaining the integrity of the genome at high temperature. Has RNA endonuclease activity with a narrow substrate specificity; the cleavage products are 3'-phosphooligonucleotides. This Saccharolobus solfataricus (strain ATCC 35092 / DSM 1617 / JCM 11322 / P2) (Sulfolobus solfataricus) protein is DNA-binding protein 7a (sso7a1).